The primary structure comprises 275 residues: Thymidylate synthase (275 aa).

Position 138 to 139 (138 to 139) interacts with dUMP; the sequence is RR. The active-site Nucleophile is cysteine 158. DUMP contacts are provided by residues 178–181, asparagine 189, and 219–221; these read RSCD and HIY. A (6R)-5,10-methylene-5,6,7,8-tetrahydrofolate-binding site is contributed by aspartate 181. A (6R)-5,10-methylene-5,6,7,8-tetrahydrofolate-binding site is contributed by alanine 274.

The protein belongs to the thymidylate synthase family. Bacterial-type ThyA subfamily. Homodimer.

The protein localises to the cytoplasm. The enzyme catalyses dUMP + (6R)-5,10-methylene-5,6,7,8-tetrahydrofolate = 7,8-dihydrofolate + dTMP. It participates in pyrimidine metabolism; dTTP biosynthesis. Functionally, catalyzes the reductive methylation of 2'-deoxyuridine-5'-monophosphate (dUMP) to 2'-deoxythymidine-5'-monophosphate (dTMP) while utilizing 5,10-methylenetetrahydrofolate (mTHF) as the methyl donor and reductant in the reaction, yielding dihydrofolate (DHF) as a by-product. This enzymatic reaction provides an intracellular de novo source of dTMP, an essential precursor for DNA biosynthesis. The chain is Thymidylate synthase from Fusobacterium nucleatum subsp. nucleatum (strain ATCC 25586 / DSM 15643 / BCRC 10681 / CIP 101130 / JCM 8532 / KCTC 2640 / LMG 13131 / VPI 4355).